The chain runs to 177 residues: 3-hydroxydecanoyl-[acyl-carrier-protein] dehydratase (177 aa).

His71 is a catalytic residue.

Belongs to the thioester dehydratase family. FabA subfamily. In terms of assembly, homodimer.

The protein resides in the cytoplasm. The enzyme catalyses a (3R)-hydroxyacyl-[ACP] = a (2E)-enoyl-[ACP] + H2O. It carries out the reaction (3R)-hydroxydecanoyl-[ACP] = (2E)-decenoyl-[ACP] + H2O. The catalysed reaction is (2E)-decenoyl-[ACP] = (3Z)-decenoyl-[ACP]. The protein operates within lipid metabolism; fatty acid biosynthesis. Functionally, necessary for the introduction of cis unsaturation into fatty acids. Catalyzes the dehydration of (3R)-3-hydroxydecanoyl-ACP to E-(2)-decenoyl-ACP and then its isomerization to Z-(3)-decenoyl-ACP. Can catalyze the dehydratase reaction for beta-hydroxyacyl-ACPs with saturated chain lengths up to 16:0, being most active on intermediate chain length. In Wigglesworthia glossinidia brevipalpis, this protein is 3-hydroxydecanoyl-[acyl-carrier-protein] dehydratase.